We begin with the raw amino-acid sequence, 229 residues long: MAKKSKQMRAALEKVDSTKAYSVEEAVALVKETNFAKFDASVEVAYNLNIDVRKADQQIRGAMVLPNGTGKTQRVLVFARGAKAEEAKAAGADFVGEDDLVAKINGGWLDFDVVIATPDMMAIVGRLGRVLGPRNLMPNPKTGTVTMDVAKAVEESKGGKITYRADKAGNVQALIGKVSFDADKLVENFKAFHDVMAKAKPATAKGTYMANVSITSTQGVGIKVDPNSL.

It belongs to the universal ribosomal protein uL1 family. Part of the 50S ribosomal subunit.

Binds directly to 23S rRNA. The L1 stalk is quite mobile in the ribosome, and is involved in E site tRNA release. Its function is as follows. Protein L1 is also a translational repressor protein, it controls the translation of the L11 operon by binding to its mRNA. This is Large ribosomal subunit protein uL1 from Streptococcus pyogenes serotype M1.